Here is a 446-residue protein sequence, read N- to C-terminus: Tubulin beta chain (446 aa).

Residues Q11, E69, S138, G142, T143, G144, N204, and N226 each coordinate GTP. Position 69 (E69) interacts with Mg(2+). Positions 427 to 446 (EAGVDEGEEFEEEEDFGDEQ) are disordered. A compositionally biased stretch (acidic residues) spans 429-446 (GVDEGEEFEEEEDFGDEQ).

It belongs to the tubulin family. In terms of assembly, dimer of alpha and beta chains. A typical microtubule is a hollow water-filled tube with an outer diameter of 25 nm and an inner diameter of 15 nM. Alpha-beta heterodimers associate head-to-tail to form protofilaments running lengthwise along the microtubule wall with the beta-tubulin subunit facing the microtubule plus end conferring a structural polarity. Microtubules usually have 13 protofilaments but different protofilament numbers can be found in some organisms and specialized cells. Requires Mg(2+) as cofactor.

Its subcellular location is the cytoplasm. It localises to the cytoskeleton. In terms of biological role, tubulin is the major constituent of microtubules, a cylinder consisting of laterally associated linear protofilaments composed of alpha- and beta-tubulin heterodimers. Microtubules grow by the addition of GTP-tubulin dimers to the microtubule end, where a stabilizing cap forms. Below the cap, tubulin dimers are in GDP-bound state, owing to GTPase activity of alpha-tubulin. The sequence is that of Tubulin beta chain from Giardia intestinalis (Giardia lamblia).